The primary structure comprises 200 residues: Coiled-coil domain-containing protein 28B (200 aa).

Met1 carries the N-acetylmethionine modification. Residues 1–10 show a composition bias toward basic residues; it reads MDDKKKKRSP. Residues 1–49 are disordered; the sequence is MDDKKKKRSPKPCLAQPAQAPGTLRRVPVPTSHSGSLALGLPHLPSPKQ. Phosphoserine is present on residues Ser46 and Ser115. Positions 141–152 are enriched in acidic residues; the sequence is EEEDDEEEEDGV. The segment at 141–164 is disordered; that stretch reads EEEDDEEEEDGVTEGLPEEQKKTM. Positions 158–183 form a coiled coil; sequence EEQKKTMADRNLDQLLSNLEDLSNSI.

Interacts with BBS1, BBS2, BBS4, BBS5, BBS6, BBS7 and TTC8/BBS8. Interacts with MAPKAP1/SIN1 isoform 1 and RICTOR.

The protein resides in the cytoplasm. It is found in the cytoskeleton. It localises to the microtubule organizing center. The protein localises to the centrosome. Its function is as follows. Involved in ciliogenesis. Regulates cilia length through its interaction with MAPKAP1/SIN1 but independently of mTORC2 complex. Modulates mTORC2 complex assembly and function, possibly enhances AKT1 phosphorylation. Does not seem to modulate assembly and function of mTORC1 complex. The chain is Coiled-coil domain-containing protein 28B (CCDC28B) from Homo sapiens (Human).